The following is a 467-amino-acid chain: MVQLNQKFINSIAQEMPPHLSMDDFVHYCGLPLRLSIRVNTLKITSDALRAILEPRGWQFEPVPWCEDGFWVTVPDDCQPGNLTEHYQGLFYIQEASSMMPPCALFMDKEPRQLLLDVASAPGSKTTQLAALMHNQGLIIANEYSASRTKALHANLQRMGVANVAITQFDGRVFGAHLYETLDAIQLDAPCSGEGTVRKDPLSLKNWCPDEIEAIAELQRDLIDSAFQALKPGGVLVYSTCTLNRRENEDVCHFLKERYGDAVVFESLNDLFKGADKALTEEGFLHIWPQIYDSEGFFVARIRKTASVARNTDDPRFVSKFPFVAANRKELSALEEAMLALGVSLPEDAVIVTRDGEFWLMPAPLDGLLTKMRFQRIGIRLAETQKHGIKVRHEAVMALPCNQMLSIEPEAAKQYLMGRDIALDNAGKAQGEKILSLHGAPLGIAKHLGNKLKNSLPRDLCRDNVQN.

S-adenosyl-L-methionine contacts are provided by residues 119–125, glutamate 143, aspartate 170, and aspartate 188; that span reads ASAPGSK. Cysteine 241 acts as the Nucleophile in catalysis.

It belongs to the class I-like SAM-binding methyltransferase superfamily. RsmB/NOP family.

The protein localises to the cytoplasm. The enzyme catalyses cytidine(1407) in 16S rRNA + S-adenosyl-L-methionine = 5-methylcytidine(1407) in 16S rRNA + S-adenosyl-L-homocysteine + H(+). Specifically methylates the cytosine at position 1407 (m5C1407) of 16S rRNA. This chain is Ribosomal RNA small subunit methyltransferase F, found in Shewanella amazonensis (strain ATCC BAA-1098 / SB2B).